We begin with the raw amino-acid sequence, 226 residues long: PKHD-type hydroxylase Nwi_0701 (226 aa).

The region spanning 78–178 (KVLPPRFNRY…RLAAFFWTQS (101 aa)) is the Fe2OG dioxygenase domain. Residues His-96, Asp-98, and His-159 each coordinate Fe cation. Arg-169 is a binding site for 2-oxoglutarate.

It depends on Fe(2+) as a cofactor. L-ascorbate serves as cofactor.

The chain is PKHD-type hydroxylase Nwi_0701 from Nitrobacter winogradskyi (strain ATCC 25391 / DSM 10237 / CIP 104748 / NCIMB 11846 / Nb-255).